The following is a 196-amino-acid chain: DnaA initiator-associating protein DiaA (196 aa).

The SIS domain maps to 34–196 (LVQSLLNGNK…DNTLFPHQDD (163 aa)).

The protein belongs to the SIS family. DiaA subfamily. In terms of assembly, homotetramer; dimer of dimers.

Required for the timely initiation of chromosomal replication via direct interactions with the DnaA initiator protein. The sequence is that of DnaA initiator-associating protein DiaA from Yersinia enterocolitica serotype O:8 / biotype 1B (strain NCTC 13174 / 8081).